The following is a 416-amino-acid chain: Advanced glycosylation end product-specific receptor (416 aa).

Residues 1–22 (MAAGAVVGAWMLVLSLGGTVTG) form the signal peptide. Residues 23 to 115 (DQNITARIGK…KETKSNYRVR (93 aa)) form the Ig-like V-type domain. The Extracellular segment spans residues 23–352 (DQNITARIGK…VEGPGLETLA (330 aa)). N-linked (GlcNAc...) asparagine glycosylation is found at Asn-25 and Asn-80. 2 disulfide bridges follow: Cys-38–Cys-98 and Cys-143–Cys-207. Ig-like C2-type domains are found at residues 123–220 (PEIV…RALH) and 238–327 (PNVD…RAVS). The chain crosses the membrane as a helical span at residues 353–373 (LTLGILGGLGTVALLIGVIVW). The Cytoplasmic portion of the chain corresponds to 374-416 (HRRRQRKGQERKVPENQEEEEEERAELNQPEEPEAAESSTGGP). Residues 377–416 (RQRKGQERKVPENQEEEEEERAELNQPEEPEAAESSTGGP) are disordered. Over residues 389–408 (NQEEEEEERAELNQPEEPEA) the composition is skewed to acidic residues.

As to quaternary structure, constitutive homodimer; disulfide-linked. Forms homooligomers. Interacts with S100A1 and APP. Interacts with S100B, S100A12 and S100A14. Interacts with TIRAP. Interacts with HMGB1. Interacts with LGP2; this interaction plays an important role in AGER-mediated pro-inflammatory responses and cytokine release. Interacts with double-strand break repair protein MRE11 which is a core component of the MRN complex; the interaction enhances MRE11 endonuclease activity and promotes DNA repair. Interacts with the MCM2-7 complex via interaction with complex member MCM2; the interaction is increased following DNA replication stress and stabilizes the MCM2-7 complex at replication forks. Post-translationally, phosphorylated on its cytoplasmic domain by PKCzeta/PRKCZ upon ligand binding. Phosphorylated by ATM following DNA damage. In terms of processing, targeted by the ubiquitin E3 ligase subunit FBXO10 to mediate its ubiquitination and degradation. As to expression, endothelial cells.

It localises to the cell membrane. The protein resides in the cell projection. Its subcellular location is the phagocytic cup. The protein localises to the early endosome. It is found in the nucleus. Its function is as follows. Cell surface pattern recognition receptor that senses endogenous stress signals with a broad ligand repertoire including advanced glycation end products, S100 proteins, high-mobility group box 1 protein/HMGB1, amyloid beta/APP oligomers, nucleic acids, histones, phospholipids and glycosaminoglycans. Advanced glycosylation end products are nonenzymatically glycosylated proteins which accumulate in vascular tissue in aging and at an accelerated rate in diabetes. These ligands accumulate at inflammatory sites during the pathogenesis of various diseases including diabetes, vascular complications, neurodegenerative disorders and cancers, and RAGE transduces their binding into pro-inflammatory responses. Upon ligand binding, uses TIRAP and MYD88 as adapters to transduce the signal ultimately leading to the induction of inflammatory cytokines IL6, IL8 and TNFalpha through activation of NF-kappa-B. Interaction with S100A12 on endothelium, mononuclear phagocytes, and lymphocytes triggers cellular activation, with generation of key pro-inflammatory mediators. Interaction with S100B after myocardial infarction may play a role in myocyte apoptosis by activating ERK1/2 and p53/TP53 signaling. Contributes to the translocation of amyloid-beta peptide (ABPP) across the cell membrane from the extracellular to the intracellular space in cortical neurons. ABPP-initiated RAGE signaling, especially stimulation of p38 mitogen-activated protein kinase (MAPK), has the capacity to drive a transport system delivering ABPP as a complex with RAGE to the intraneuronal space. Participates in endothelial albumin transcytosis together with HMGB1 through the RAGE/SRC/Caveolin-1 pathway, leading to endothelial hyperpermeability. Mediates the loading of HMGB1 in extracellular vesicles (EVs) that shuttle HMGB1 to hepatocytes by transferrin-mediated endocytosis and subsequently promote hepatocyte pyroptosis by activating the NLRP3 inflammasome. Binds to DNA and promotes extracellular hypomethylated DNA (CpG DNA) uptake by cells via the endosomal route to activate inflammatory responses. Mediates phagocytosis by non-professional phagocytes (NPP) and this is enhanced by binding to ligands including RNA, DNA, HMGB1 and histones. Promotes NPP-mediated phagocytosis of Saccharomyces cerevisiae spores by binding to RNA attached to the spore wall. Also promotes NPP-mediated phagocytosis of apoptotic cells. Following DNA damage, recruited to DNA double-strand break sites where it colocalizes with the MRN repair complex via interaction with double-strand break repair protein MRE11. Enhances the endonuclease activity of MRE11, promoting the end resection of damaged DNA. Promotes DNA damage repair in trophoblasts which enhances trophoblast invasion and contributes to placental development and maintenance. Protects cells from DNA replication stress by localizing to damaged replication forks where it stabilizes the MCM2-7 complex and promotes faithful progression of the replication fork. The chain is Advanced glycosylation end product-specific receptor (AGER) from Bos taurus (Bovine).